A 461-amino-acid polypeptide reads, in one-letter code: D-phenylhydantoinase (461 aa).

Residues H59, H61, and K151 each coordinate a divalent metal cation. K151 is modified (N6-carboxylysine). Position 156 (Y156) interacts with substrate. The a divalent metal cation site is built by H182 and H239. Position 286 (S286) interacts with substrate. D313 provides a ligand contact to a divalent metal cation. Position 335 (N335) interacts with substrate.

It belongs to the metallo-dependent hydrolases superfamily. Hydantoinase/dihydropyrimidinase family. As to quaternary structure, homotetramer. A divalent metal cation serves as cofactor. Carboxylation allows a single lysine to coordinate two divalent metal cations.

It carries out the reaction D-5-phenylhydantoin + H2O = N-carbamoyl-D-phenylglycine + H(+). In terms of biological role, catalyzes the stereospecific hydrolysis of the cyclic amide bond of D-hydantoin derivatives with an aromatic side chains at the 5'-position. Has no activity on dihydropyrimidines. The physiological function is unknown. This is D-phenylhydantoinase from Escherichia coli O81 (strain ED1a).